The following is a 357-amino-acid chain: UDP-N-acetylglucosamine--N-acetylmuramyl-(pentapeptide) pyrophosphoryl-undecaprenol N-acetylglucosamine transferase (357 aa).

Residues 13–15 (TGG), Asn-125, Arg-161, Ser-189, Ile-243, and Gln-288 contribute to the UDP-N-acetyl-alpha-D-glucosamine site.

Belongs to the glycosyltransferase 28 family. MurG subfamily.

The protein resides in the cell inner membrane. The catalysed reaction is di-trans,octa-cis-undecaprenyl diphospho-N-acetyl-alpha-D-muramoyl-L-alanyl-D-glutamyl-meso-2,6-diaminopimeloyl-D-alanyl-D-alanine + UDP-N-acetyl-alpha-D-glucosamine = di-trans,octa-cis-undecaprenyl diphospho-[N-acetyl-alpha-D-glucosaminyl-(1-&gt;4)]-N-acetyl-alpha-D-muramoyl-L-alanyl-D-glutamyl-meso-2,6-diaminopimeloyl-D-alanyl-D-alanine + UDP + H(+). It participates in cell wall biogenesis; peptidoglycan biosynthesis. Cell wall formation. Catalyzes the transfer of a GlcNAc subunit on undecaprenyl-pyrophosphoryl-MurNAc-pentapeptide (lipid intermediate I) to form undecaprenyl-pyrophosphoryl-MurNAc-(pentapeptide)GlcNAc (lipid intermediate II). The polypeptide is UDP-N-acetylglucosamine--N-acetylmuramyl-(pentapeptide) pyrophosphoryl-undecaprenol N-acetylglucosamine transferase (Bordetella pertussis (strain Tohama I / ATCC BAA-589 / NCTC 13251)).